Reading from the N-terminus, the 166-residue chain is Interferon gamma (166 aa).

The first 23 residues, 1–23 (MKYTSYILAFQLCIILGSSSCYS), serve as a signal peptide directing secretion. Residue Gln-24 is modified to Pyrrolidone carboxylic acid. N-linked (GlcNAc...) asparagine glycosylation is found at Asn-39, Asn-44, and Asn-106.

The protein belongs to the type II (or gamma) interferon family. As to quaternary structure, homodimer. As to expression, released primarily from activated T lymphocytes.

Its subcellular location is the secreted. In terms of biological role, produced by lymphocytes activated by specific antigens or mitogens. IFN-gamma, in addition to having antiviral activity, has important immunoregulatory functions. It is a potent activator of macrophages, it has antiproliferative effects on transformed cells and it can potentiate the antiviral and antitumor effects of the type I interferons. The polypeptide is Interferon gamma (IFNG) (Marmota monax (Woodchuck)).